Here is a 368-residue protein sequence, read N- to C-terminus: H-2 class I histocompatibility antigen, D-P alpha chain (368 aa).

Positions methionine 1–alanine 21 are cleaved as a signal peptide. An alpha-1 region spans residues glycine 22–glycine 111. Topologically, residues glycine 22–serine 303 are extracellular. N-linked (GlcNAc...) asparagine glycosylation occurs at asparagine 107. The interval glycine 112–threonine 203 is alpha-2. Cysteine 122 and cysteine 185 are joined by a disulfide. N-linked (GlcNAc...) asparagine glycans are attached at residues asparagine 197 and asparagine 277. The tract at residues aspartate 204–tryptophan 295 is alpha-3. Positions proline 206–arginine 294 constitute an Ig-like C1-type domain. Cysteine 224 and cysteine 280 are joined by a disulfide. The tract at residues glutamate 296–serine 303 is connecting peptide. The helical transmembrane segment at tyrosine 304–methionine 330 threads the bilayer. Residues arginine 331–alanine 368 are Cytoplasmic-facing. Phosphoserine is present on residues serine 350 and serine 353.

The protein belongs to the MHC class I family. Heterodimer of an alpha chain and a beta chain (beta-2-microglobulin).

It is found in the membrane. Involved in the presentation of foreign antigens to the immune system. The protein is H-2 class I histocompatibility antigen, D-P alpha chain (H2-D1) of Mus musculus (Mouse).